The primary structure comprises 582 residues: Heterogeneous nuclear ribonucleoprotein C homolog (582 aa).

The tract at residues 1-21 (MSEALETGDPSPPPPIVSENG) is disordered. 3 C2H2-type zinc fingers span residues 102–125 (YYCC…RGYH), 130–154 (SSCD…RRTH), and 213–235 (YACL…VEMH).

The protein localises to the nucleus. In Caenorhabditis elegans, this protein is Heterogeneous nuclear ribonucleoprotein C homolog.